Reading from the N-terminus, the 135-residue chain is ATP synthase epsilon chain (135 aa).

Residues 84–107 (SLSEEKQSEEQKQRLERAKKALSS) are disordered. Basic and acidic residues predominate over residues 86–102 (SEEKQSEEQKQRLERAK).

It belongs to the ATPase epsilon chain family. F-type ATPases have 2 components, CF(1) - the catalytic core - and CF(0) - the membrane proton channel. CF(1) has five subunits: alpha(3), beta(3), gamma(1), delta(1), epsilon(1). CF(0) has three main subunits: a, b and c.

Its subcellular location is the cell membrane. Produces ATP from ADP in the presence of a proton gradient across the membrane. The chain is ATP synthase epsilon chain from Elusimicrobium minutum (strain Pei191).